A 612-amino-acid polypeptide reads, in one-letter code: MACPF domain-containing protein NSL1 (612 aa).

In terms of domain architecture, MACPF spans 5 to 338 (NFTRLDAHSA…PPIEELHQFL (334 aa)).

This sequence belongs to the complement C6/C7/C8/C9 (TC 1.C.39) family.

Negatively controls the salicylic acid (SA)-mediated pathway of programmed cell death in plant immunity. The chain is MACPF domain-containing protein NSL1 (NSL1) from Arabidopsis thaliana (Mouse-ear cress).